Reading from the N-terminus, the 342-residue chain is Holliday junction branch migration complex subunit RuvB (342 aa).

The segment at 1-185 (MTVKPLRDVT…FPIQERLEYY (185 aa)) is large ATPase domain (RuvB-L). ATP-binding positions include Leu-24, Arg-25, Gly-66, Lys-69, Thr-70, Ser-71, 132 to 134 (EDY), Arg-175, Tyr-185, and Arg-222. Thr-70 contacts Mg(2+). Positions 186 to 256 (GPAELKEIAV…VVDRTLRRLE (71 aa)) are small ATPAse domain (RuvB-S). The head domain (RuvB-H) stretch occupies residues 259–342 (ARGLDAMDRR…RPGGKQGSLV (84 aa)). Residues Arg-314 and Arg-319 each coordinate DNA.

It belongs to the RuvB family. In terms of assembly, homohexamer. Forms an RuvA(8)-RuvB(12)-Holliday junction (HJ) complex. HJ DNA is sandwiched between 2 RuvA tetramers; dsDNA enters through RuvA and exits via RuvB. An RuvB hexamer assembles on each DNA strand where it exits the tetramer. Each RuvB hexamer is contacted by two RuvA subunits (via domain III) on 2 adjacent RuvB subunits; this complex drives branch migration. In the full resolvosome a probable DNA-RuvA(4)-RuvB(12)-RuvC(2) complex forms which resolves the HJ.

It is found in the cytoplasm. It catalyses the reaction ATP + H2O = ADP + phosphate + H(+). In terms of biological role, the RuvA-RuvB-RuvC complex processes Holliday junction (HJ) DNA during genetic recombination and DNA repair, while the RuvA-RuvB complex plays an important role in the rescue of blocked DNA replication forks via replication fork reversal (RFR). RuvA specifically binds to HJ cruciform DNA, conferring on it an open structure. The RuvB hexamer acts as an ATP-dependent pump, pulling dsDNA into and through the RuvAB complex. RuvB forms 2 homohexamers on either side of HJ DNA bound by 1 or 2 RuvA tetramers; 4 subunits per hexamer contact DNA at a time. Coordinated motions by a converter formed by DNA-disengaged RuvB subunits stimulates ATP hydrolysis and nucleotide exchange. Immobilization of the converter enables RuvB to convert the ATP-contained energy into a lever motion, pulling 2 nucleotides of DNA out of the RuvA tetramer per ATP hydrolyzed, thus driving DNA branch migration. The RuvB motors rotate together with the DNA substrate, which together with the progressing nucleotide cycle form the mechanistic basis for DNA recombination by continuous HJ branch migration. Branch migration allows RuvC to scan DNA until it finds its consensus sequence, where it cleaves and resolves cruciform DNA. This is Holliday junction branch migration complex subunit RuvB from Anaeromyxobacter sp. (strain K).